The primary structure comprises 63 residues: DNA-directed RNA polymerase 7 kDa subunit (63 aa).

Belongs to the poxviridae DNA-directed RNA polymerase 7 kDa subunit family. In terms of assembly, the DNA-dependent RNA polymerase (vRNAP) consists of eight subunits encoded by early viral genes and termed according to their apparent molecular masses Rpo147, Rpo132, Rpo35, Rpo30, Rpo22, Rpo19, Rpo18, and Rpo7. The same holoenzyme, with the addition of the transcription-specificity factor RAP94, is used for early gene expression.

Its subcellular location is the virion. The enzyme catalyses RNA(n) + a ribonucleoside 5'-triphosphate = RNA(n+1) + diphosphate. Part of the DNA-dependent RNA polymerase which catalyzes the transcription of viral DNA into RNA using the four ribonucleoside triphosphates as substrates. Responsible for the transcription of early, intermediate and late genes. DNA-dependent RNA polymerase associates with the early transcription factor (ETF), itself composed of OPG118 and OPG134, thereby allowing the early genes transcription. Late transcription, and probably also intermediate transcription, require newly synthesized RNA polymerase. This chain is DNA-directed RNA polymerase 7 kDa subunit (OPG090), found in Homo sapiens (Human).